Here is a 227-residue protein sequence, read N- to C-terminus: Ribosomal RNA large subunit methyltransferase E (227 aa).

S-adenosyl-L-methionine-binding residues include Gly78, Trp80, Asp103, Asp119, and Asp143. The active-site Proton acceptor is the Lys183.

This sequence belongs to the class I-like SAM-binding methyltransferase superfamily. RNA methyltransferase RlmE family.

The protein resides in the cytoplasm. It carries out the reaction uridine(2552) in 23S rRNA + S-adenosyl-L-methionine = 2'-O-methyluridine(2552) in 23S rRNA + S-adenosyl-L-homocysteine + H(+). Functionally, specifically methylates the uridine in position 2552 of 23S rRNA at the 2'-O position of the ribose in the fully assembled 50S ribosomal subunit. This chain is Ribosomal RNA large subunit methyltransferase E, found in Rickettsia peacockii (strain Rustic).